Here is a 516-residue protein sequence, read N- to C-terminus: Protein DML1 (516 aa).

Belongs to the misato family.

It localises to the mitochondrion. Its function is as follows. Involved in the partitioning of the mitochondrial organelle and mitochondrial DNA (mtDNA) inheritance. The sequence is that of Protein DML1 (DML1) from Coccidioides immitis (strain RS) (Valley fever fungus).